The following is a 535-amino-acid chain: MATASVAFKSREDHRKQIELEEARKAGLAPAEVDEDGKEINPHIPQYMSSAPWYLNSEKPSLKHQRKWKSDPNYTKSWYDRGAKIFQAEKYRKGACQNCGAMTHTAKACMDRPRKIGAKYTNMNIAPDEKIESFELDYDGKRDRWNGYDPSTYHRVIDLYEAKEDARKKYLKEQQLKKLEEKNNNEKGDDANSDGEEDEDDLRVDEAKVDESRQMDFAKVEKRVRTTGGGSTGTVRNLRIREDTAKYLLNLDVNSAHYDPKTRSMREDPLPDADPNDKFYLGDNQYRNSGQALEFKQLNIHSWEAFDKGQDMHMQAAPSQAELLYKSFQVAKEKLKSQTKDTIMDKYGNAATEDEIPMELLLGQSERQVEYDRAGRIIKGQEVILPKSKYEEDVHANNHTSVWGSYWKDHQWGYKCCQQIIRNSYCTGSAGIEAAEAALDLMKANIARKEATEESPKKVEEKRMASWGTDIPEDLELNEEALANALKKEDLSRREEKDERKRKYNVKYNNDVTPEEMEAYRMKRVHHEDPMKDFL.

Residues 21 to 44 are disordered; it reads EEARKAGLAPAEVDEDGKEINPHI. A CCHC-type zinc finger spans residues 96–109; it reads CQNCGAMTHTAKAC. Positions 176–190 are enriched in basic and acidic residues; sequence LKKLEEKNNNEKGDD. Disordered stretches follow at residues 176 to 204 and 489 to 508; these read LKKL…DLRV and EDLS…NVKY. The span at 191–203 shows a compositional bias: acidic residues; that stretch reads ANSDGEEDEDDLR. Ser-193 is modified (phosphoserine). The Nuclear localization signal signature appears at 486–493; it reads LKKEDLSR. Positions 489-501 are enriched in basic and acidic residues; that stretch reads EDLSRREEKDERK.

It belongs to the SLU7 family. Mainly expressed in tissues undergoing cell proliferation, particularly in lateral organs.

It localises to the nucleus. Functionally, participates in the second catalytic step of pre-mRNA splicing, when the free hydroxyl group of exon I attacks the 3'-splice site to generate spliced mRNA and the excised lariat intron. Together with SMP2, involved in the timing of cell cycle arrest during leaf development, in a STRUWWELPETER (SWP) dependent manner; promotes cell proliferation in developing organs. The protein is Pre-mRNA-splicing factor SLU7-A of Arabidopsis thaliana (Mouse-ear cress).